The following is a 109-amino-acid chain: Large ribosomal subunit protein uL24 (109 aa).

It belongs to the universal ribosomal protein uL24 family. Part of the 50S ribosomal subunit.

In terms of biological role, one of two assembly initiator proteins, it binds directly to the 5'-end of the 23S rRNA, where it nucleates assembly of the 50S subunit. Functionally, one of the proteins that surrounds the polypeptide exit tunnel on the outside of the subunit. This chain is Large ribosomal subunit protein uL24, found in Rickettsia akari (strain Hartford).